The sequence spans 93 residues: Putative membrane protein insertion efficiency factor (93 aa).

The protein belongs to the UPF0161 family.

The protein localises to the cell inner membrane. Could be involved in insertion of integral membrane proteins into the membrane. The chain is Putative membrane protein insertion efficiency factor from Cupriavidus taiwanensis (strain DSM 17343 / BCRC 17206 / CCUG 44338 / CIP 107171 / LMG 19424 / R1) (Ralstonia taiwanensis (strain LMG 19424)).